The chain runs to 588 residues: Sulfite reductase [NADPH] hemoprotein beta-component (588 aa).

Residues cysteine 442, cysteine 448, cysteine 487, and cysteine 491 each contribute to the [4Fe-4S] cluster site. Residue cysteine 491 coordinates siroheme.

Belongs to the nitrite and sulfite reductase 4Fe-4S domain family. Alpha(8)-beta(8). The alpha component is a flavoprotein, the beta component is a hemoprotein. Siroheme is required as a cofactor. The cofactor is [4Fe-4S] cluster.

The catalysed reaction is hydrogen sulfide + 3 NADP(+) + 3 H2O = sulfite + 3 NADPH + 4 H(+). The protein operates within sulfur metabolism; hydrogen sulfide biosynthesis; hydrogen sulfide from sulfite (NADPH route): step 1/1. In terms of biological role, component of the sulfite reductase complex that catalyzes the 6-electron reduction of sulfite to sulfide. This is one of several activities required for the biosynthesis of L-cysteine from sulfate. This Actinobacillus pleuropneumoniae serotype 5b (strain L20) protein is Sulfite reductase [NADPH] hemoprotein beta-component.